The primary structure comprises 423 residues: Histidine--tRNA ligase (423 aa).

Belongs to the class-II aminoacyl-tRNA synthetase family. In terms of assembly, homodimer.

Its subcellular location is the cytoplasm. It carries out the reaction tRNA(His) + L-histidine + ATP = L-histidyl-tRNA(His) + AMP + diphosphate + H(+). This is Histidine--tRNA ligase from Anoxybacillus flavithermus (strain DSM 21510 / WK1).